Here is a 167-residue protein sequence, read N- to C-terminus: Gametocyte-specific factor 1 (167 aa).

CHHC U11-48K-type zinc fingers lie at residues 14-41 and 48-75; these read LLQC…RKNH and LATC…DDKS. Positions 17, 23, 33, 37, 51, 57, 67, and 71 each coordinate Zn(2+).

This sequence belongs to the UPF0224 (FAM112) family.

Its subcellular location is the cytoplasm. Required for spermatogenesis and is involved in the suppression of retrotransposon transcription in male germ cells. The polypeptide is Gametocyte-specific factor 1 (GTSF1) (Bos taurus (Bovine)).